A 317-amino-acid chain; its full sequence is Annexin D2 (317 aa).

Alanine 2 bears the N-acetylalanine mark. Annexin repeat units lie at residues 11–82, 83–154, 166–238, and 242–313; these read PLPE…LWTL, DPPE…PLVS, MLAR…AVIT, and YPEK…ALLG. Residues phenylalanine 24, glycine 26, glycine 28, and glutamate 68 each coordinate Ca(2+). At serine 95 the chain carries Phosphoserine. 2 positions are modified to phosphothreonine: threonine 100 and threonine 112. Residue tyrosine 129 is modified to Phosphotyrosine. Positions 255 and 259 each coordinate Ca(2+). The residue at position 284 (tyrosine 284) is a Phosphotyrosine. Serine 289 carries the phosphoserine modification. Ca(2+) contacts are provided by aspartate 299, threonine 300, and glutamate 305.

Belongs to the annexin (TC 1.A.31.1) family. In terms of tissue distribution, expressed mainly in roots and flowers. Low in stems and bearly detectable in leaves.

The protein localises to the cytoplasm. It is found in the cytosol. The protein resides in the membrane. May mediate regulated, targeted secretion of Golgi-derived vesicles during seedling development. This chain is Annexin D2 (ANN2), found in Arabidopsis thaliana (Mouse-ear cress).